The primary structure comprises 272 residues: Acidic leucine-rich nuclear phosphoprotein 32 family member B (272 aa).

LRR repeat units follow at residues 18–38 (AVRE…EGLT), 43–64 (NLEF…PKLP), 65–87 (KLKK…AEEL), and 89–110 (SLTH…EPLK). The 39-residue stretch at 123 to 161 (CEVTNRSDYRETVFRLLPQLSYLDGYDREDQEAPDSDVE) folds into the LRRCT domain. Residues 149–254 (DREDQEAPDS…DEDEDEEEEE (106 aa)) show a composition bias toward acidic residues. Residues 149–272 (DREDQEAPDS…RETDDEGEDD (124 aa)) are disordered. Residues Ser-164 and Ser-171 each carry the phosphoserine modification. Residues 255-265 (SGKGEKRKRET) show a composition bias toward basic and acidic residues. The Nuclear localization signal signature appears at 260–263 (KRKR). Thr-265 bears the Phosphothreonine mark.

It belongs to the ANP32 family. Interacts with histones H3 and H4. Interacts with KLF5; this interaction induces promoter region-specific histone incorporation and inhibition of histone acetylation by ANP32B. Post-translationally, some glutamate residues are glycylated by TTLL8. This modification occurs exclusively on glutamate residues and results in a glycine chain on the gamma-carboxyl group. Directly cleaved by caspase-3/CASP3.

It is found in the nucleus. Its function is as follows. Multifunctional protein that is involved in the regulation of many processes including cell proliferation, apoptosis, cell cycle progression or transcription. Regulates the proliferation of neuronal stem cells, differentiation of leukemic cells and progression from G1 to S phase of the cell cycle. As negative regulator of caspase-3-dependent apoptosis, may act as an antagonist of ANP32A in regulating tissue homeostasis. Exhibits histone chaperone properties, able to recruit histones to certain promoters, thus regulating the transcription of specific genes. Also plays an essential role in the nucleocytoplasmic transport of specific mRNAs via the uncommon nuclear mRNA export receptor XPO1/CRM1. Participates in the regulation of adequate adaptive immune responses by acting on mRNA expression and cell proliferation. The chain is Acidic leucine-rich nuclear phosphoprotein 32 family member B (Anp32b) from Mus musculus (Mouse).